The sequence spans 335 residues: Transcription factor bHLH63 (335 aa).

Positions 110–160 (MTMNRDDLVEEGEEEKSKITEQNNGSTKSIKKMKHKAKKEENNFSNDSSKV) are disordered. In terms of domain architecture, bHLH spans 178-228 (QATDSHSIAERVRREKISERMKFLQDLVPGCDKITGKAGMLDEIINYVQSL).

Homodimer. Interacts with IBH1. Binds reversibly to CRY2 after blue light illumination. As to expression, expressed constitutively in roots, leaves, and stems.

The protein localises to the nucleus. Transcription factor that binds DNA to G box 5'-CACGTG-3' and, to a lower extent, to E-box 5'-CANNTG-3' in vitro. Binds to chromatin DNA of the FT gene and promotes its expression, and thus triggers flowering in response to blue light. The chain is Transcription factor bHLH63 (BHLH63) from Arabidopsis thaliana (Mouse-ear cress).